The chain runs to 463 residues: Bifunctional protein HldE (463 aa).

Residues Met1–Ile315 are ribokinase. Asn191–Glu194 lines the ATP pocket. Asp260 is an active-site residue. The segment at Phe334–Asp463 is cytidylyltransferase.

This sequence in the N-terminal section; belongs to the carbohydrate kinase PfkB family. The protein in the C-terminal section; belongs to the cytidylyltransferase family. As to quaternary structure, homodimer.

The catalysed reaction is D-glycero-beta-D-manno-heptose 7-phosphate + ATP = D-glycero-beta-D-manno-heptose 1,7-bisphosphate + ADP + H(+). It catalyses the reaction D-glycero-beta-D-manno-heptose 1-phosphate + ATP + H(+) = ADP-D-glycero-beta-D-manno-heptose + diphosphate. It participates in nucleotide-sugar biosynthesis; ADP-L-glycero-beta-D-manno-heptose biosynthesis; ADP-L-glycero-beta-D-manno-heptose from D-glycero-beta-D-manno-heptose 7-phosphate: step 1/4. The protein operates within nucleotide-sugar biosynthesis; ADP-L-glycero-beta-D-manno-heptose biosynthesis; ADP-L-glycero-beta-D-manno-heptose from D-glycero-beta-D-manno-heptose 7-phosphate: step 3/4. In terms of biological role, catalyzes the phosphorylation of D-glycero-D-manno-heptose 7-phosphate at the C-1 position to selectively form D-glycero-beta-D-manno-heptose-1,7-bisphosphate. Functionally, catalyzes the ADP transfer from ATP to D-glycero-beta-D-manno-heptose 1-phosphate, yielding ADP-D-glycero-beta-D-manno-heptose. In Helicobacter pylori (strain HPAG1), this protein is Bifunctional protein HldE.